Here is a 359-residue protein sequence, read N- to C-terminus: MAKITIKVGSNLLVQQDGQLDKRYIVELCREIGNLMSEGHQVVLVSSGARAAGYGYLNKSNAQEADLYMKQALCAVGQVQLMKLYESAMSFYGIKVAQILLTREDFSHRKRFLNLRNTLIGLTEMGILPIVNENDSVATEEIMFGDNDVLASMFAIGWNADYLLLMTSVDGVIDQNGKVIPFYREDTTNMAIAKNASSRWGSGGITSKIRAARAAAAAGIQTSICNGKKLENIAQFVLTGQTGTVFERVGPIKAKKAWIGFLSKPKGSIFINEGAKIAIENNRSLLPVGVVHIEGDFQAGDVVEIRLDDGTFLGKGIINFSSAEAKKIVGLKSDQLEDVLGYSCSKVLIHIDNLWKRDN.

Position 7 (K7) interacts with ATP. Residues S47, D135, and N147 each coordinate substrate. Position 202-208 (202-208 (SGGITSK)) interacts with ATP. The PUA domain maps to 266 to 343 (KGSIFINEGA…DQLEDVLGYS (78 aa)).

It belongs to the glutamate 5-kinase family.

The protein localises to the cytoplasm. The enzyme catalyses L-glutamate + ATP = L-glutamyl 5-phosphate + ADP. It functions in the pathway amino-acid biosynthesis; L-proline biosynthesis; L-glutamate 5-semialdehyde from L-glutamate: step 1/2. Catalyzes the transfer of a phosphate group to glutamate to form L-glutamate 5-phosphate. The sequence is that of Glutamate 5-kinase from Kosmotoga olearia (strain ATCC BAA-1733 / DSM 21960 / TBF 19.5.1).